The sequence spans 122 residues: Basic phospholipase A2 F16 (122 aa).

Intrachain disulfides connect Cys-26–Cys-115, Cys-28–Cys-44, Cys-43–Cys-95, Cys-49–Cys-122, Cys-50–Cys-88, Cys-57–Cys-81, and Cys-75–Cys-86. Tyr-27, Gly-29, and Gly-31 together coordinate Ca(2+). His-47 is a catalytic residue. Asp-48 is a binding site for Ca(2+). Residue Asp-89 is part of the active site.

It belongs to the phospholipase A2 family. Group II subfamily. D49 sub-subfamily. Ca(2+) serves as cofactor. Expressed by the venom gland.

It is found in the secreted. It catalyses the reaction a 1,2-diacyl-sn-glycero-3-phosphocholine + H2O = a 1-acyl-sn-glycero-3-phosphocholine + a fatty acid + H(+). Its activity is regulated as follows. Pre-incubation with heparin markedly reduces the neurotoxicity of this toxin. In terms of biological role, snake venom phospholipase A2 (PLA2) that produces neuromuscular blockade in chick biventer cervicis preparations in the absence and presence of crotapotin. In contrast, in mouse phrenic nerve-diaphragm preparations, the neuromuscular blockade is dependent on crotapotin. PLA2 catalyzes the calcium-dependent hydrolysis of the 2-acyl groups in 3-sn-phosphoglycerides. The protein is Basic phospholipase A2 F16 of Crotalus durissus terrificus (South American rattlesnake).